The sequence spans 473 residues: Bifunctional protein GlmU (473 aa).

The tract at residues 1-226 (MRAPVAVVIL…AGEASGINDL (226 aa)) is pyrophosphorylase. Residues 10–13 (LAAG), K24, Q75, 80–81 (GT), 102–104 (YGD), G136, E151, N166, and N224 contribute to the UDP-N-acetyl-alpha-D-glucosamine site. D104 contributes to the Mg(2+) binding site. N224 contributes to the Mg(2+) binding site. The interval 227–247 (VQLAEVEEAFQRRWARRLLQG) is linker. The tract at residues 248–473 (GLRLVAPHRF…TPASGGAKEE (226 aa)) is N-acetyltransferase. UDP-N-acetyl-alpha-D-glucosamine contacts are provided by R330 and K348. The active-site Proton acceptor is H360. Residues Y363 and N374 each coordinate UDP-N-acetyl-alpha-D-glucosamine. Residues A377, 383 to 384 (NY), S402, A420, and R437 each bind acetyl-CoA. The tract at residues 439-473 (RARTIPGWQHPGLTGRRGPPDDNDATPASGGAKEE) is disordered.

It in the N-terminal section; belongs to the N-acetylglucosamine-1-phosphate uridyltransferase family. The protein in the C-terminal section; belongs to the transferase hexapeptide repeat family. As to quaternary structure, homotrimer. Mg(2+) is required as a cofactor.

It localises to the cytoplasm. The catalysed reaction is alpha-D-glucosamine 1-phosphate + acetyl-CoA = N-acetyl-alpha-D-glucosamine 1-phosphate + CoA + H(+). It carries out the reaction N-acetyl-alpha-D-glucosamine 1-phosphate + UTP + H(+) = UDP-N-acetyl-alpha-D-glucosamine + diphosphate. It functions in the pathway nucleotide-sugar biosynthesis; UDP-N-acetyl-alpha-D-glucosamine biosynthesis; N-acetyl-alpha-D-glucosamine 1-phosphate from alpha-D-glucosamine 6-phosphate (route II): step 2/2. It participates in nucleotide-sugar biosynthesis; UDP-N-acetyl-alpha-D-glucosamine biosynthesis; UDP-N-acetyl-alpha-D-glucosamine from N-acetyl-alpha-D-glucosamine 1-phosphate: step 1/1. Its pathway is bacterial outer membrane biogenesis; LPS lipid A biosynthesis. In terms of biological role, catalyzes the last two sequential reactions in the de novo biosynthetic pathway for UDP-N-acetylglucosamine (UDP-GlcNAc). The C-terminal domain catalyzes the transfer of acetyl group from acetyl coenzyme A to glucosamine-1-phosphate (GlcN-1-P) to produce N-acetylglucosamine-1-phosphate (GlcNAc-1-P), which is converted into UDP-GlcNAc by the transfer of uridine 5-monophosphate (from uridine 5-triphosphate), a reaction catalyzed by the N-terminal domain. The sequence is that of Bifunctional protein GlmU from Halorhodospira halophila (strain DSM 244 / SL1) (Ectothiorhodospira halophila (strain DSM 244 / SL1)).